Reading from the N-terminus, the 385-residue chain is Succinate--CoA ligase [ADP-forming] subunit beta (385 aa).

One can recognise an ATP-grasp domain in the interval 9-244 (KEILRKYGVP…QDEEDPLETR (236 aa)). ATP-binding positions include Lys46, 53–55 (GRG), Glu99, Cys102, and Glu107. Mg(2+) contacts are provided by Asn199 and Asp213. Substrate contacts are provided by residues Asn264 and 321-323 (GIM).

This sequence belongs to the succinate/malate CoA ligase beta subunit family. As to quaternary structure, heterotetramer of two alpha and two beta subunits. Mg(2+) is required as a cofactor.

The catalysed reaction is succinate + ATP + CoA = succinyl-CoA + ADP + phosphate. It carries out the reaction GTP + succinate + CoA = succinyl-CoA + GDP + phosphate. The protein operates within carbohydrate metabolism; tricarboxylic acid cycle; succinate from succinyl-CoA (ligase route): step 1/1. Its function is as follows. Succinyl-CoA synthetase functions in the citric acid cycle (TCA), coupling the hydrolysis of succinyl-CoA to the synthesis of either ATP or GTP and thus represents the only step of substrate-level phosphorylation in the TCA. The beta subunit provides nucleotide specificity of the enzyme and binds the substrate succinate, while the binding sites for coenzyme A and phosphate are found in the alpha subunit. In Rickettsia bellii (strain OSU 85-389), this protein is Succinate--CoA ligase [ADP-forming] subunit beta.